Here is a 338-residue protein sequence, read N- to C-terminus: Solute carrier family 35 member B1 homolog (338 aa).

9 consecutive transmembrane segments (helical) span residues 9 to 29 (FVIYAVGIFVCYFLYGIVQEK), 53 to 73 (LALVWVQCLCNYVFAKVLLTI), 84 to 104 (GSYVACSLTYLLAMVSTNMAM), 111 to 131 (TAVVGKSAKPIPVMILGVLIG), 135 to 155 (YSWTRYACVLTIVLGVILFMY), 168 to 188 (TLLGEVLLFLSLSMDGLTGAV), 213 to 233 (LMLGVAMVFTGEAKEFMYFTI), 244 to 264 (LIAVCGVLGQFFIFLMVASFG), and 284 to 304 (VLLFGNVLIARQWLGAVLVFA). A Di-lysine motif motif is present at residues 334–338 (KKLNS).

It belongs to the nucleotide-sugar transporter family. SLC35B subfamily.

The protein localises to the endoplasmic reticulum membrane. Functionally, probable sugar transporter. This chain is Solute carrier family 35 member B1 homolog (meigo), found in Drosophila melanogaster (Fruit fly).